The following is a 594-amino-acid chain: Probable acyl-CoA dehydrogenase (594 aa).

The Proton acceptor role is filled by E405.

The protein belongs to the acyl-CoA dehydrogenase family. FAD is required as a cofactor.

It carries out the reaction a 2,3-saturated acyl-CoA + A = a 2,3-dehydroacyl-CoA + AH2. It functions in the pathway lipid metabolism; fatty acid beta-oxidation. In terms of biological role, involved in the degradation of long-chain fatty acids. This chain is Probable acyl-CoA dehydrogenase (fadE), found in Bacillus subtilis (strain 168).